Here is a 512-residue protein sequence, read N- to C-terminus: UDP-N-acetylmuramoyl-L-alanyl-D-glutamate--2,6-diaminopimelate ligase (512 aa).

Ser-32 serves as a coordination point for UDP-N-acetyl-alpha-D-muramoyl-L-alanyl-D-glutamate. Residue 114-120 coordinates ATP; the sequence is GTNGKTT. UDP-N-acetyl-alpha-D-muramoyl-L-alanyl-D-glutamate-binding positions include 156 to 157, Ser-183, and Arg-191; that span reads TT. Lys-223 carries the post-translational modification N6-carboxylysine. Meso-2,6-diaminopimelate contacts are provided by residues Arg-395, 419–422, Gly-469, and Glu-473; that span reads DNPR. A Meso-diaminopimelate recognition motif motif is present at residues 419–422; that stretch reads DNPR.

Belongs to the MurCDEF family. MurE subfamily. It depends on Mg(2+) as a cofactor. In terms of processing, carboxylation is probably crucial for Mg(2+) binding and, consequently, for the gamma-phosphate positioning of ATP.

Its subcellular location is the cytoplasm. The catalysed reaction is UDP-N-acetyl-alpha-D-muramoyl-L-alanyl-D-glutamate + meso-2,6-diaminopimelate + ATP = UDP-N-acetyl-alpha-D-muramoyl-L-alanyl-gamma-D-glutamyl-meso-2,6-diaminopimelate + ADP + phosphate + H(+). Its pathway is cell wall biogenesis; peptidoglycan biosynthesis. Functionally, catalyzes the addition of meso-diaminopimelic acid to the nucleotide precursor UDP-N-acetylmuramoyl-L-alanyl-D-glutamate (UMAG) in the biosynthesis of bacterial cell-wall peptidoglycan. The chain is UDP-N-acetylmuramoyl-L-alanyl-D-glutamate--2,6-diaminopimelate ligase from Chlorobium phaeobacteroides (strain DSM 266 / SMG 266 / 2430).